The chain runs to 260 residues: Carbonic anhydrase (260 aa).

Positions 1 to 31 (MAHAWGYGPADGPESWAESFPIANGPRQSPI) are disordered. An Alpha-carbonic anhydrase domain is found at 3 to 259 (HAWGYGPADG…LKGRKVRASF (257 aa)). His64 functions as the Proton acceptor in the catalytic mechanism. The Zn(2+) site is built by His94, His96, and His119. The active site involves Tyr127. 198–199 (TT) is a binding site for substrate.

The protein belongs to the alpha-carbonic anhydrase family. Zn(2+) is required as a cofactor.

The enzyme catalyses hydrogencarbonate + H(+) = CO2 + H2O. Functionally, reversible hydration of carbon dioxide. The chain is Carbonic anhydrase (cahz) from Danio rerio (Zebrafish).